The primary structure comprises 343 residues: L-threonine 3-dehydrogenase (343 aa).

C40 provides a ligand contact to Zn(2+). Residues T42 and H45 each act as charge relay system in the active site. Positions 65, 66, 95, 98, 101, and 109 each coordinate Zn(2+). Residues I177, D197, R202, 264-266 (LGI), and 288-289 (IY) contribute to the NAD(+) site.

The protein belongs to the zinc-containing alcohol dehydrogenase family. In terms of assembly, homotetramer. Zn(2+) serves as cofactor.

The protein localises to the cytoplasm. It carries out the reaction L-threonine + NAD(+) = (2S)-2-amino-3-oxobutanoate + NADH + H(+). The protein operates within amino-acid degradation; L-threonine degradation via oxydo-reductase pathway; glycine from L-threonine: step 1/2. Its function is as follows. Catalyzes the NAD(+)-dependent oxidation of L-threonine to 2-amino-3-ketobutyrate. The chain is L-threonine 3-dehydrogenase from Vibrio parahaemolyticus serotype O3:K6 (strain RIMD 2210633).